Here is a 179-residue protein sequence, read N- to C-terminus: Nicotinamide-nucleotide adenylyltransferase (179 aa).

Belongs to the archaeal NMN adenylyltransferase family.

It localises to the cytoplasm. The enzyme catalyses beta-nicotinamide D-ribonucleotide + ATP + H(+) = diphosphate + NAD(+). Its pathway is cofactor biosynthesis; NAD(+) biosynthesis; NAD(+) from nicotinamide D-ribonucleotide: step 1/1. This is Nicotinamide-nucleotide adenylyltransferase from Thermoplasma acidophilum (strain ATCC 25905 / DSM 1728 / JCM 9062 / NBRC 15155 / AMRC-C165).